Reading from the N-terminus, the 299-residue chain is Virginiamycin B lyase (299 aa).

His229 serves as a coordination point for substrate. Mg(2+) is bound at residue Glu269. His271 (proton acceptor) is an active-site residue. Glu286 contacts Mg(2+).

The protein belongs to the Vgb family. As to quaternary structure, monomer. Mg(2+) is required as a cofactor.

In terms of biological role, inactivates the type B streptogramin antibiotics by linearizing the lactone ring at the ester linkage, generating a free phenylglycine carboxylate and converting the threonyl moiety into 2-amino-butenoic acid. The chain is Virginiamycin B lyase from Bordetella parapertussis (strain 12822 / ATCC BAA-587 / NCTC 13253).